The chain runs to 467 residues: Asparagine--tRNA ligase (467 aa).

Belongs to the class-II aminoacyl-tRNA synthetase family. In terms of assembly, homodimer.

It is found in the cytoplasm. The enzyme catalyses tRNA(Asn) + L-asparagine + ATP = L-asparaginyl-tRNA(Asn) + AMP + diphosphate + H(+). The polypeptide is Asparagine--tRNA ligase (Protochlamydia amoebophila (strain UWE25)).